The primary structure comprises 426 residues: Probable serine/threonine-protein kinase PBL3 (426 aa).

A disordered region spans residues methionine 1 to leucine 42. Glycine 2 is lipidated: N-myristoyl glycine. Cysteine 4 carries the S-palmitoyl cysteine lipid modification. Residues serine 7–leucine 42 show a composition bias toward low complexity. Phosphothreonine is present on threonine 72. The 284-residue stretch at phenylalanine 83 to leucine 366 folds into the Protein kinase domain. Residues leucine 89–valine 97 and lysine 121 contribute to the ATP site. Residue tyrosine 166 is modified to Phosphotyrosine. Residue aspartate 216 is the Proton acceptor of the active site. The residue at position 250 (serine 250) is a Phosphoserine. Threonine 251 and threonine 256 each carry phosphothreonine. Tyrosine 264 carries the phosphotyrosine modification. The segment covering glutamate 367 to glutamine 394 has biased composition (polar residues). Residues glutamate 367–arginine 426 form a disordered region.

This sequence belongs to the protein kinase superfamily. Ser/Thr protein kinase family. Interacts with the Xanthomonas campestris effector XopAC/AvrAC. As to expression, strongly expressed in leaves, moderately in flowers, and barely in roots.

It localises to the cell membrane. The protein resides in the nucleus. The catalysed reaction is L-seryl-[protein] + ATP = O-phospho-L-seryl-[protein] + ADP + H(+). It carries out the reaction L-threonyl-[protein] + ATP = O-phospho-L-threonyl-[protein] + ADP + H(+). In terms of biological role, may be involved in plant defense signaling. This Arabidopsis thaliana (Mouse-ear cress) protein is Probable serine/threonine-protein kinase PBL3.